The sequence spans 975 residues: Translation initiation factor IF-2 (975 aa).

2 disordered regions span residues 49–110 (KLSG…APKA) and 193–339 (AAAP…GRGA). Residues 63–72 (KKTAARKAAP) show a composition bias toward basic residues. Composition is skewed to low complexity over residues 73-94 (KKAA…AKTP), 193-202 (AAAPEAPAPQ), and 209-225 (VVGT…ASAP). Positions 308–318 (GADRGGRDFDK) are enriched in basic and acidic residues. Residues 324 to 336 (GPSAPAAGPAAAG) show a composition bias toward low complexity. The region spanning 469 to 639 (TRPPVVTVMG…KLVAEVAELK (171 aa)) is the tr-type G domain. The tract at residues 478-485 (GHVDHGKT) is G1. 478–485 (GHVDHGKT) provides a ligand contact to GTP. A G2 region spans residues 503–507 (GITQH). A G3 region spans residues 525–528 (DTPG). GTP contacts are provided by residues 525 to 529 (DTPGH) and 579 to 582 (NKID). The interval 579 to 582 (NKID) is G4. Residues 615 to 617 (SAL) form a G5 region.

The protein belongs to the TRAFAC class translation factor GTPase superfamily. Classic translation factor GTPase family. IF-2 subfamily.

It localises to the cytoplasm. Functionally, one of the essential components for the initiation of protein synthesis. Protects formylmethionyl-tRNA from spontaneous hydrolysis and promotes its binding to the 30S ribosomal subunits. Also involved in the hydrolysis of GTP during the formation of the 70S ribosomal complex. In Bdellovibrio bacteriovorus (strain ATCC 15356 / DSM 50701 / NCIMB 9529 / HD100), this protein is Translation initiation factor IF-2.